A 511-amino-acid chain; its full sequence is Zinc finger CCCH-type with G patch domain-containing protein (511 aa).

The segment at 157–180 adopts a C3H1-type zinc-finger fold; that stretch reads PCSYYLEGECRFDEARCRYSHGAL. Residues 254–281 form a disordered region; it reads DQEDELTSEDSSSVNDGSSDEEESDMDD. Positions 271-281 are enriched in acidic residues; that stretch reads SSDEEESDMDD. The 47-residue stretch at 311 to 357 folds into the G-patch domain; it reads TRGIGSKLMEKMGYIHGTGLGSDGRGIVTPVSAQILPKGRSLDACME. Disordered stretches follow at residues 409 to 433 and 478 to 511; these read GSDNKQQAEPEAKKAKANDLQQHST and MHNQKQELATLQAQERSLSKEQQTRKSKNKMFEF. The span at 414–425 shows a compositional bias: basic and acidic residues; that stretch reads QQAEPEAKKAKA. Over residues 478–493 the composition is skewed to polar residues; that stretch reads MHNQKQELATLQAQER. Positions 494 to 511 are enriched in basic and acidic residues; that stretch reads SLSKEQQTRKSKNKMFEF.

Its subcellular location is the nucleus. Its function is as follows. Transcription repressor. In Drosophila ananassae (Fruit fly), this protein is Zinc finger CCCH-type with G patch domain-containing protein.